A 917-amino-acid chain; its full sequence is Isoleucine--tRNA ligase (917 aa).

The 'HIGH' region motif lies at Pro-57–His-67. Residue Glu-554 coordinates L-isoleucyl-5'-AMP. The short motif at Lys-595 to Ser-599 is the 'KMSKS' region element. Lys-598 lines the ATP pocket. Cys-886, Cys-889, Cys-906, and Cys-909 together coordinate Zn(2+).

It belongs to the class-I aminoacyl-tRNA synthetase family. IleS type 1 subfamily. As to quaternary structure, monomer. It depends on Zn(2+) as a cofactor.

It is found in the cytoplasm. The catalysed reaction is tRNA(Ile) + L-isoleucine + ATP = L-isoleucyl-tRNA(Ile) + AMP + diphosphate. Its function is as follows. Catalyzes the attachment of isoleucine to tRNA(Ile). As IleRS can inadvertently accommodate and process structurally similar amino acids such as valine, to avoid such errors it has two additional distinct tRNA(Ile)-dependent editing activities. One activity is designated as 'pretransfer' editing and involves the hydrolysis of activated Val-AMP. The other activity is designated 'posttransfer' editing and involves deacylation of mischarged Val-tRNA(Ile). This Staphylococcus aureus (strain Mu3 / ATCC 700698) protein is Isoleucine--tRNA ligase.